We begin with the raw amino-acid sequence, 385 residues long: Gibberellin 20 oxidase 5 (385 aa).

The 101-residue stretch at 224–324 folds into the Fe2OG dioxygenase domain; the sequence is DGSGIFRCNY…RRSLVFFSCP (101 aa). Fe cation is bound by residues H249, D251, and H305. R315 is an active-site residue.

Belongs to the iron/ascorbate-dependent oxidoreductase family. GA20OX subfamily. Fe(2+) serves as cofactor. L-ascorbate is required as a cofactor. Expressed in 3-day-old seedlings and siliques. Detected in dry seeds, roots, old leaves and inflorescences.

The catalysed reaction is gibberellin A12 + 2 2-oxoglutarate + 3 O2 + H(+) = gibberellin A9 + 2 succinate + 3 CO2 + 2 H2O. It carries out the reaction gibberellin A53 + 2 2-oxoglutarate + 3 O2 + H(+) = gibberellin A20 + 2 succinate + 3 CO2 + 2 H2O. The protein operates within plant hormone biosynthesis; gibberellin biosynthesis. Its function is as follows. Key oxidase enzyme in the biosynthesis of gibberellin that catalyzes the conversion of GA12 and GA53 to GA9 and GA20 respectively, via a three-step oxidation at C-20 of the GA skeleton. The chain is Gibberellin 20 oxidase 5 (GA20OX5) from Arabidopsis thaliana (Mouse-ear cress).